Consider the following 68-residue polypeptide: Conotoxin Pu5.5 (68 aa).

An N-terminal signal peptide occupies residues 1–22; the sequence is MRCVPVFIILLVLIASAPSVDA. Positions 23–49 are excised as a propeptide; sequence RPQTKDDALASFRDSIKRHLQTLLDAR.

This sequence belongs to the conotoxin T superfamily. Contains 2 disulfide bonds that can be either 'C1-C3, C2-C4' or 'C1-C4, C2-C3', since these disulfide connectivities have been observed for conotoxins with cysteine framework V (for examples, see AC P0DQQ7 and AC P81755). As to expression, expressed by the venom duct.

The protein resides in the secreted. This chain is Conotoxin Pu5.5, found in Conus pulicarius (Flea-bitten cone).